The sequence spans 297 residues: Lipoyl synthase (297 aa).

7 residues coordinate [4Fe-4S] cluster: C37, C42, C48, C63, C67, C70, and S276. The region spanning W49–L265 is the Radical SAM core domain.

This sequence belongs to the radical SAM superfamily. Lipoyl synthase family. Requires [4Fe-4S] cluster as cofactor.

The protein localises to the cytoplasm. The enzyme catalyses [[Fe-S] cluster scaffold protein carrying a second [4Fe-4S](2+) cluster] + N(6)-octanoyl-L-lysyl-[protein] + 2 oxidized [2Fe-2S]-[ferredoxin] + 2 S-adenosyl-L-methionine + 4 H(+) = [[Fe-S] cluster scaffold protein] + N(6)-[(R)-dihydrolipoyl]-L-lysyl-[protein] + 4 Fe(3+) + 2 hydrogen sulfide + 2 5'-deoxyadenosine + 2 L-methionine + 2 reduced [2Fe-2S]-[ferredoxin]. It functions in the pathway protein modification; protein lipoylation via endogenous pathway; protein N(6)-(lipoyl)lysine from octanoyl-[acyl-carrier-protein]: step 2/2. Its function is as follows. Catalyzes the radical-mediated insertion of two sulfur atoms into the C-6 and C-8 positions of the octanoyl moiety bound to the lipoyl domains of lipoate-dependent enzymes, thereby converting the octanoylated domains into lipoylated derivatives. This chain is Lipoyl synthase, found in Rickettsia prowazekii (strain Madrid E).